The sequence spans 303 residues: Ribosomal RNA small subunit methyltransferase H (303 aa).

S-adenosyl-L-methionine-binding positions include 33–35, aspartate 52, phenylalanine 79, aspartate 97, and glutamine 104; that span reads GGH.

The protein belongs to the methyltransferase superfamily. RsmH family.

It is found in the cytoplasm. The catalysed reaction is cytidine(1402) in 16S rRNA + S-adenosyl-L-methionine = N(4)-methylcytidine(1402) in 16S rRNA + S-adenosyl-L-homocysteine + H(+). Functionally, specifically methylates the N4 position of cytidine in position 1402 (C1402) of 16S rRNA. The protein is Ribosomal RNA small subunit methyltransferase H of Wolinella succinogenes (strain ATCC 29543 / DSM 1740 / CCUG 13145 / JCM 31913 / LMG 7466 / NCTC 11488 / FDC 602W) (Vibrio succinogenes).